The chain runs to 234 residues: Flagellar L-ring protein (234 aa).

Positions 1-15 (MRYAVICMLLLAASG) are cleaved as a signal peptide. A lipid anchor (N-palmitoyl cysteine) is attached at Cys-16. Cys-16 is lipidated: S-diacylglycerol cysteine.

It belongs to the FlgH family. In terms of assembly, the basal body constitutes a major portion of the flagellar organelle and consists of four rings (L,P,S, and M) mounted on a central rod.

The protein localises to the cell outer membrane. It localises to the bacterial flagellum basal body. Its function is as follows. Assembles around the rod to form the L-ring and probably protects the motor/basal body from shearing forces during rotation. The chain is Flagellar L-ring protein from Oleidesulfovibrio alaskensis (strain ATCC BAA-1058 / DSM 17464 / G20) (Desulfovibrio alaskensis).